Reading from the N-terminus, the 760-residue chain is Mitochondrial intermediate peptidase (760 aa).

A mitochondrion-targeting transit peptide spans 1–19 (MLARSVRTLVVSPKTVFRF). H543 lines the Zn(2+) pocket. The active site involves E544. Residue H547 coordinates Zn(2+).

It belongs to the peptidase M3 family. It depends on Zn(2+) as a cofactor.

The protein resides in the mitochondrion matrix. It carries out the reaction Release of an N-terminal octapeptide as second stage of processing of some proteins imported into the mitochondrion.. Cleaves proteins, imported into the mitochondrion, to their mature size. While most mitochondrial precursor proteins are processed to the mature form in one step by mitochondrial processing peptidase (MPP), the sequential cleavage by MIP of an octapeptide after initial processing by MPP is a required step for a subgroup of nuclear-encoded precursor proteins destined for the matrix or the inner membrane. The sequence is that of Mitochondrial intermediate peptidase (OCT1) from Leucoagaricus gongylophorus (Leaf-cutting ant fungus).